A 374-amino-acid polypeptide reads, in one-letter code: Autophagy-related protein 18e (374 aa).

WD repeat units follow at residues lysine 28–isoleucine 66, glutamate 72–glutamate 117, alanine 202–glutamate 242, and valine 247–aspartate 286.

Belongs to the WD repeat PROPPIN family. In terms of assembly, component of the PI(3,5)P2 regulatory complex at least composed of ATG18, SAC/FIG4, FAB1 and VAC14.

It is found in the preautophagosomal structure membrane. The protein localises to the vacuole membrane. Its function is as follows. The PI(3,5)P2 regulatory complex regulates both the synthesis and turnover of phosphatidylinositol 3,5-bisphosphate (PtdIns(3,5)P2). Required for autophagy. The chain is Autophagy-related protein 18e (ATG18E) from Arabidopsis thaliana (Mouse-ear cress).